We begin with the raw amino-acid sequence, 152 residues long: Transcriptional regulator MraZ (152 aa).

SpoVT-AbrB domains are found at residues 5–52 (ASSL…PLAQ) and 81–124 (ATEY…DEAR).

This sequence belongs to the MraZ family. In terms of assembly, forms oligomers.

The protein localises to the cytoplasm. It is found in the nucleoid. The chain is Transcriptional regulator MraZ from Pseudoalteromonas translucida (strain TAC 125).